The chain runs to 62 residues: Short neurotoxin 1 (62 aa).

Residues 1 to 17 (MQCCNQQSSQPKTTTTC) show a composition bias toward polar residues. The segment at 1–20 (MQCCNQQSSQPKTTTTCPGG) is disordered. 4 cysteine pairs are disulfide-bonded: Cys-3-Cys-24, Cys-17-Cys-41, Cys-43-Cys-54, and Cys-55-Cys-60.

It belongs to the three-finger toxin family. Short-chain subfamily. Type I alpha-neurotoxin sub-subfamily. In terms of tissue distribution, expressed by the venom gland.

The protein resides in the secreted. In terms of biological role, binds to muscle nicotinic acetylcholine receptor (nAChR) and inhibit acetylcholine from binding to the receptor, thereby impairing neuromuscular transmission. In Acanthophis antarcticus (Common death adder), this protein is Short neurotoxin 1.